Here is a 539-residue protein sequence, read N- to C-terminus: CTP synthase (539 aa).

The segment at 1–267 (MKEAKFIFVT…GTQVLEHFHL (267 aa)) is amidoligase domain. Residue Ser15 coordinates CTP. Residue Ser15 participates in UTP binding. ATP is bound by residues 16–21 (SLGKGL) and Asp73. 2 residues coordinate Mg(2+): Asp73 and Glu141. CTP contacts are provided by residues 148–150 (DIE), 188–193 (KTKPTQ), and Lys224. Residues 188–193 (KTKPTQ) and Lys224 contribute to the UTP site. Residues 292–536 (TVSIVGKYTE…IKAVVNKVKK (245 aa)) form the Glutamine amidotransferase type-1 domain. An L-glutamine-binding site is contributed by Gly359. The Nucleophile; for glutamine hydrolysis role is filled by Cys386. L-glutamine contacts are provided by residues 387–390 (LGMQ), Glu410, and Arg464. Active-site residues include His509 and Glu511.

This sequence belongs to the CTP synthase family. As to quaternary structure, homotetramer.

The enzyme catalyses UTP + L-glutamine + ATP + H2O = CTP + L-glutamate + ADP + phosphate + 2 H(+). It catalyses the reaction L-glutamine + H2O = L-glutamate + NH4(+). The catalysed reaction is UTP + NH4(+) + ATP = CTP + ADP + phosphate + 2 H(+). It functions in the pathway pyrimidine metabolism; CTP biosynthesis via de novo pathway; CTP from UDP: step 2/2. Its activity is regulated as follows. Allosterically activated by GTP, when glutamine is the substrate; GTP has no effect on the reaction when ammonia is the substrate. The allosteric effector GTP functions by stabilizing the protein conformation that binds the tetrahedral intermediate(s) formed during glutamine hydrolysis. Inhibited by the product CTP, via allosteric rather than competitive inhibition. In terms of biological role, catalyzes the ATP-dependent amination of UTP to CTP with either L-glutamine or ammonia as the source of nitrogen. Regulates intracellular CTP levels through interactions with the four ribonucleotide triphosphates. The protein is CTP synthase of Wolbachia sp. subsp. Brugia malayi (strain TRS).